The primary structure comprises 7603 residues: MTYCRKDKSTIELTAATAAPVSCEGAVTENFRTSRRSKEDPLVHLHSTLHGRSPLRQTCVNMDRVSPFCGTEGCVGSCAGSYCMGYGQCQCDINPHRARGERRTDRHGCTTGVHAHWTGAARRHASSLHPRGHRCQGKRRPCPLSLFPGSCRPCDSFGYPRSSMSSLASDANNSSSAADIVHDFCTKICDPVSVSSFAEVGGSPRSSDASSRPLGKALRKSRLVGFFLVPVFVVFFVLSSDATSSTRGVGVLSARADREEKSSVSSSSRASSSPGASALLVQTTYAENPYRDTKAAGYTGRSSRRSARARRRRAADGGEGKGFLGDMLNKSMLETRSRSTAADPYQQFTSCGSGMFVSTEVGEDGGVEKTAKVDESMNCWNVCAFVEDLVYDQCSSTPSPTECITRALKSHSLVPDGYKGNCRYSSPQDVSPTFWDAEPDSEFCLDKGMNAWLKSDSWDDFVSKKPPGCIYPKQDPSIPASTPTAYVNDATSGLGEALASLVPVEYYVVVRDAEEAMNNPIEYGAYVASSIVPREYWDKVSSDAKDGWHVARAFSVPDKPAEFAALTTAADGSSTSANICLYAAVETANHSDGTSKTFVNYGMIAQTETCEGKIGVLPVADIRGSGILDSSAQEISRKTGFNLCVARRWVTRHLSENGIKSTAQVPMFQVALDAPCASFVSAYAYTDEVPSHWGQWEQYFVAKTYPLTRGIYGIPDAARCPWSYAVQYGLKCYTSIEYDFYMYLGSFAEGQIACRRLVSNIQVPSDFSRLAVMQTDDDEKIMTFLSEPGTFTWVGLFQGSQALVPVKTGFMDSGRVSEQTCPAEVLATGQFSHRNSEIEEKCLQAGANISTPGWKTTWGGLDGNSEIAPWDIKWCSGHPQTERNNRYVDCAGLRVNDNMESCIESAPCDEANPVFCTYPVDYGPYLETTTPQGQSSTGPRLPPYIGCLLRKTCVIQFTLTRPDTSSDTTLPGAHGTIWGVPSEGGFLAVKANCMAVNGPMIGPYRVTSTVNLASLAAFRSARPGLYELCYCNTNSPAVSVVTTGATPDTQCMHQSSFNQLIASLGLTKYNENVGFSQAVQLPTASATVSTKSVLALVGRDSWGGVPTVYCGWQSTGRSCPFDVRVTSNGSWKLRPFTTKLTFYPVDSSVLVTDLCTSEESPAIVVSVTIQSGDTGSAILDAENATSLFYSVCEGKKFLGYVVLKEIGNAVEAKISLENVVLSDQTNVNADDVTLILRGEFTDALLLRSKVVAVSVESATDSDCSTLTLASLPESSVTIVPFPTLSSGTGDLVELHFKAGPSAKKLCWMETIAMGADRDSRTFSTYLVTFPRASTVRELSVEDSRCFGPSDHPCRFRVTPEPVPSEENPINASPYLPSTFRVYVMKDGCPSSAEDSVLDEIDNSSGADPVAANAKGILLELEWESESAMQAVLQPQYFPWLQAIGSANLCWVYTRGNAETECPIGSTSCGDTFGKMYAVGPTSDVQANVVVCLPGAPEPCLTTVEGVNLNLYERITDRMAALDTCGSDTGIGLLTPWGHYAGLIGSSLSALEDGVLRSRSGPSHPSSVSQPSPSFALLGQGLSQTKASFHGSDGRSRGSKSLMWSFATDNDLTDPSSGNTPSNATSLVFQIPFASEGGSLELCFRTGESDSDDLTRFTEPVGHVVYGWRLHGATLAVEATTNPNAVFYRVTVVSGIDAAGALSSTVVYLKPVKGYPEGTTVPCDYDLDTSGDVAHQVQGPVVSSDVDDVTWDDDLGGTSSRGSSASFKIPLLHYQGMAVCWSQLVEASPAQGSHSQSPFSVRSATLVGYFAGPSLPVLAENSDVAVACALAKTTCEIAVGPGRAAVDYTGGLAITPAFLDVRVTVVLDAELLAAPCPDPSDPGYENAIRATSQTRLVLPSDVLTPERQTFLVDSNARELLKTNGKAGICYRVDNCATESDAPTSDCTKFLGLALWVGPTAETPDKVTICKAQQRDCLLRIDGSNMDVVDYSAPRAAYAATCGEPGQYVTATLVQTSSTPSQETLDSDLVSNEHASWAAFAFAIQPASLWRLCWNPFDAATMQDEPAEDRFVVNRGFLVFPATPEVESERVELDSSSQTMLRLVISAMVTEAALEKVSRPDTPVTEHYVYVSPVLSHANGVAEDVVCADADEETKVQWTSVDAKTPTAFGNEDSNDAATASRIHYSITAISVEQQVCWRSVYRAEDGTVVHEERIYLSKVPAVLTPELDTSVANQVSPLLTFCSLGTEEMCLVTLKPRASSDSTPATFPPGGELYVVHEGDCPSERADPKLVNAAGDGVPTTDTTVVRLHVVTFDTTRVALGFPEDDRTWMSARKAAALCFVFGENQCPASGACVERIGMIYWRGPRVFEDTQLRVLCNDPQGCDISVTGLNLNTYDLSYSRVAALDSCGEPGGLGRLDIVRYPAGYTQDSPVEPLDDYFTSDDSFGQGSFAINNMGRGVLTCGASEAVSVTTASWGPADLQNSKVACDPVDVLEHVAAHCEGKAICVVYPHTPRDDETVRSYIGLKQEEFLRLSDPCPGTANEDLRLVGTHTCVAGTRSVTPEVAMVETTSRVAAGGANYSNPSTDAMDMVVKLPPDIAKVYELCWNPDPVITLQPARYNVKVGVAQIVPVAGLVDLISTVFERIDDANVEVVLRGILAEEVAVNTSIYLKQIPDEGAISCSNDDQENAIGKATFMSYESGDAGTTVIRYRIAAVDSEKAVCWRWTSQDFAAGGGGVQSILIGTLPGTVNPVSRAWGEMMCSLPGGTDCSIEFEPDSLLGTYPTEEEPGSGAVTGFTDYAQFANLHSHLRKGTKIGLIAGRESCPEDPQDLAYQRFTQTGIAEGDISDSEVQETTIGLPISGGKPSSLVSTMSVGLLHWLAVHKDAIVCWVNADECKTTKTPRFATCTATVGTLSWKGPIPTEWSVTAVDLVCRTGGRCRLKIPGRNMFKLDLSESPVAIVRTCGGDEGPGIAKLQQTPVLYPSQQADDGVQSGSLLQTTMSLSSNQRRAVRQLRRSCKMGSEDHADRCDTRLATGNTAMGFAAGSRRHPSFMEVLLGSRKAPSSSVDDSIEVVTTIKTGGEYAICWNPSALSTNLSDFTVNIGRVFSYGLEQIDALCYSGSYCELNFTYIGSSNPTLFVGVKAVDCSDPDLTTELGSGGVFKTTGRNTLSLSEPIPRRPQSSRVSYKLCWCDMNEVQECVGTSYSAPVGTLTVQFIEEKAVACQEAVGACSISFDASDFQGDSSGTIFLTQYSGTNADCMQPKKYVPHVSAIFGNIVVQVDQATLAATLGQHAAEQGSFAICRQMTAAIDEYTGSSNAVPEADENQVESAEPEQNAEGETPEQGAEEAGGNAAEPGAESGTQEGAVTPGVEPDGGEPVAPEVDSGGGESVAPGVDSGGGDSVAPGVDSGGGDSVAPGVDSGSGVAGTASEGVDEQSDLTTSQPEDLEAKSQTALGMVQLDDTGSDTSLQVTSSPALLGVLQFAGPASTEYQDETQVAVLGMATRIAVVTQGFDRFIDTDITADSSDIPTGVAHVRLVPAGGCGHDNGSNSVVLSLSQVIQKESDLPEKAIYSQEEILQINTGAIRKLDVCWCDLGTACKKDTDFTIPVLSVGLVAPEQDLVVKCPCGSKCPFEFQGVSEAPQHGVEPDYFVKNDGCSGAPAELPDQGHLVTVVSSVIAAEHSDDAVADVDRSPAGELETLNKQIQAFRAEVDRTSVFATGTTEGSREYAICYCAFRTGGCANDALIRIGTLTVYDVWRDKMSAVVADDVTIRPPSPPFSGIQGTLYAQAGAVTLPVSTLPDKAYQIDLSTLEGRRTPASVVDVRYCESEVTQSCDDEGAPRIDLTQIELKGPVSLSFEDECRLGFRCTIVTEVFNPTEEEKLAALASCGSSSEHDYGLSSGVRTAEDNPAKAVEVTFEWEKTLPDVGRSELDFCWCKKTNQVDCSAVDQYTLKVGTLYITGLAAGQEATCHVGSVCVAHLKGYRLVEEVVNVRVVAGECGTAGSEISGLPNGGIFVPEQVAESSAEVSLIEPFFGLAVETAAICQCPMPTQACESEADYAWEAGRYIFSGPSERVVINALSGQGVEVEIPWRGEQDTASDFFILTRDTMCSGTTSGLIDGVVDNGLGHLEDGEVAWEEFAYHGGIYSVCYCRRSTPLATGSANPFSGGSASASQHLCGTVAEYRVSVALVLLSGPVTSNAIFSCFGGLACHVDISVAGVDSLESQEFLDSAALQVSTESCGADVIMEAMLSDSEESSDTLDDSSSDAQMKTFNQRFGFPNVVTVSAGYYVACWKPATSSPALLLGDFVVKGPVADKTPLESSSGEDIDVAVTYVGLESSDEAKAMRIQIAPIPEGRENDAFDCASLNLSEAQPYLRYTNLNRAPDTVESVSVQFSRIVWKAVSILIDNQSPNVLPGSYFAICFCNGNRGDCSVSENYFFQTNKWAVGGLSQRTLDEPLPVGRTITLTLPGKRLPLHNHLMLLPSLDRSTFAERHCGDAGGAGDGRIISATRLAHVTDWVGFKEVTITSASRTILMCWCGGDNCQTGDKFRTFVGSLSVEFPKFEATSAVIGGTFTVTLRGSVLRAQDAITVVDQSKQCGEEGTDEMDASAVEVPVGLEVTDLIQLRQARVVHADSTADSTSLSVADTSTPLVWQSWPIKTKPSVSGRLRVCYCSSEGGVCTGASRFSVWVGNVQVKGPSTGEVEIVTVDGEAKVETSGVSLALTDKLRIFAKSLAASDTVRDRRELCESGITAESTTVVADYVSPDGRTETFPVDLEPGFRYVLCWSGGTGASTQSARANPAVTRAAPTVNLPSLYRANSGSNASTVQLAEEATAALNMLQQAASTGSATSALAPHAETETPTETWSYLDAITPTGFSTGLEFRLVQNFESEVLYIPGSPNVSHSYVAYVGQKDLQADCEEIKQNPLITMETMIHIQDDSVSFSVGRISEAGLYPVCVCDSTANECYDVGTAHVDKTYWKTVAELVYDNRFFMLPCVTRGIQASAADGQSWSEDRVWLPDGMGAWSFVLTTTDSDSKPAPVLKRTPATGSKAATWVNFYEKGLRSTVACATGSGQRIFFLGPGVVYMMDPVPGLTPDLSTATGQMFTHSVLKPVDFSVREPYIFFSDYETQVITSINIENPSLTHAFFPTDPVMLFSAGVNVMDTDENFMALCVADTFNHIVGRLNISFDTMNKPQSQVTGTPWTAYFGTPKTAQNGINGFSYPFALTSYSPQSTSEAELMSLLLVTELVSDRLVFLDLSNNGLTFYKQISLSERHLISGLQSVDKTVMLISRAWPPTSKSGGMDAYVSLLNLEDVGGDLYFTYPDFRSKLQSGLFYSFEPLITGSVIQSFKEVSGSDLAKMGLTLNSATGVISGTVSHTGPFTIAVAGGDLLETFTWTISGEAGCRSGEYFDSTNNACELCPVGTFRDQEANLQKCHDIKPYSTTLSPGSTHLAQCRCFPGFEIGNLGDCHPCGAGTYKSSISDTKCTGRCPGNMHSYIQGAENEEDLLCMCDAGYYEDGGGCTPCQQGYYCPGEHSPPEPCPENHTTKGGASKSISDCVCVAGYTKQGDACVECDRLSYKGTTGNDACTGCPQPAAKGDRDALIASTKLDEAQFTTKPGAKKVSDCMLCASGFFYDVSNGGCTPCRKNYYCPGTDQEPRACVENATTLRGGAESTFDCKCPKGYGGSVARNPLDKAIVCVACPKNTFQHLDGVMTDCLPCPPFTMTKSTKSASFSACVARPGFYLSSRLSDMSRSLAESRSDDGTVGDDVDLDDNALSGTTNSGWTTSSSNSERVRKAEVQYENMSDEELLDLPRLCQRGTGLIDILLPEVKMQKYTNSFEQCIIACARNVYCTSLTFTNEGNAVPAMTASVTNHTGTFIIGYWICELHMYGPPVDQETVASITDPITETVVPASWTVSCAMQRPESDTVWRSVTYEECPVNAYCPGDEEAQIYQCPASSVTLANRASAAEHCKCIPGYHLSGRQCEPCRVGTYKNTTDNTNCAECPTGFTTENLASISAYDCACIPGLYMIANADADAEGEADHTPADGSSNSSEDSIVTHPKPDADSSDSQAPAEQTEGHAGNTNQQVDAADGETPDTTHEEASEAESVSAVELRGGLLVRGDGGVLQRAFKASQNSASKRSSRALGDAIGEEQGLSFYQTTAAPWLQPDIRQELEKIVTLHPCVSCYKHMYCPGLWMDPPVNQIHMPPQHCPEGSTVPLSTALSDSVEKCLCMAGYAVVEGSTGGTHEDNAYFGCEKCAAGTYKELQENAPCAGRCMRDAETIEGAVAKIQCFCKIGKYAVVAEDAEGIITCQDCIAGGVCPGGLKTRARQAVEQDHSFVKITIDDHQVPFPSSGFYAVYKPLNETVWSPAMVPMVASFTGDTFKEFTDTGPAPDDHTDEGGANLDSTGGSGEPSSSAPVDPSGENEGQLLTGTTGAVSALQMRSRANDTSVHQYDRIPDIHPCVDDVRCRGGSHNSCVHGSAGYLCSACEEDYSEIRYKSGCQACLPLWLDSFIFILMRLVVCGIIWIITALTIIAVQQQACIHPVLIRIVMSHMFFLSVYGLMPATSQSQLAGWASIYRLFFFEFYFALHPYFKMPCFFRSLGIVMPEAHVWYWQHFFQIFVPFIDAVLLTIIGAICVATYKVMYSAYISRVLVVLEEARQAHGDDMWTEKTIRKIESERCLGMFRYIYGTSTPWENFVRLCTDLIPAYTAIWFWHFPTFVIECTMLMGCIETRYKSEDPISVLAAFPVQICSFENPYFLSGLILGGVGLLVWGVGSIAGFVAYMSGDHSSDTIEQRFKHGFLVNGYQYAYRWWEGVIGLRKTCVALIITMYVHANASGAQEIFRNSANLALTVLSTALQLQLEPFDKRSHDMANRMEFYGLMVNIIIGVIFQGSYYFEVFKYMGAIPLAVAIFYYLYVLWSLFVEWGRMVMMRPHLVSIPSLWRYYNRVTRSLARLYTSRNAKIYYNYITKDMVLEAATKSRVFHLRRLLLRRKKTSYRKINYENRTYFVAALSDSLSQLVIAWCQFTIPGDWLDFTIRYAFCYCFWQRYQDNRSLRVPLDLEEFEAVKPTLFSDWYYDSEKNDPQGEGDIDFGTEILEGGEITFNTAEQDFLDLMLDDDVYDDSPITLMELYVAVQSMQHVPQRQLRRLHLAYRERMTQAGDSTAPQLRKENHALEGELEELNRALLEMAGADENMPDLTFSPLDFFFTVEMVNQAQLEVERLRGLIESEIDDIARARAAQAVAVHLELSMNEAADVDKLLEAMETDERTTKEEEMTRIGYVEESTSRMEKKAGLAGRRARLAFADKRPPVNLDDKRRIKLGLAAGVGGAQRRRIGLVTRGAEGPPGAKRRIGRHEVEFHRTVQGLAAGAAPAAGLRSHMGTSSSLGDQLGDDRRTVRLGTNLSTPSAVGNKRTLRRDTSGASAELIVDTAPKAPAATRTLSPLLDREPPVVESEGSVGERRESPTPSRSPSGTTRTVGSVVRSVTPEPSDSVGREESGSEAPLISPSASSLASPRSLSPLTERRGSQSSDLGGRRRLGPLTGPRPPPPVGEAAPAEAPSPSPRSSSPLAAQPKGQGLPLGKRQLKKPGSPKQE.

A glycan (N-linked (GlcNAc...) asparagine) is linked at asparagine 172. The chain crosses the membrane as a helical span at residues 223 to 243; it reads LVGFFLVPVFVVFFVLSSDAT. Disordered stretches follow at residues 248 to 275 and 291 to 323; these read GVGV…SSPG and RDTK…GKGF. A compositionally biased stretch (low complexity) spans 263-275; sequence SVSSSSRASSSPG. A compositionally biased stretch (basic residues) spans 302 to 313; it reads SSRRSARARRRR. Asparagine 329, asparagine 589, asparagine 848, asparagine 1128, asparagine 1183, and asparagine 1402 each carry an N-linked (GlcNAc...) asparagine glycan. The segment at 1554-1574 is disordered; it reads VLRSRSGPSHPSSVSQPSPSF. Over residues 1557–1573 the composition is skewed to low complexity; sequence SRSGPSHPSSVSQPSPS. Asparagine 1622, asparagine 2578, asparagine 2664, asparagine 3094, and asparagine 3126 each carry an N-linked (GlcNAc...) asparagine glycan. The disordered stretch occupies residues 3316 to 3445; it reads SNAVPEADEN…SDLTTSQPED (130 aa). The span at 3321 to 3340 shows a compositional bias: acidic residues; that stretch reads EADENQVESAEPEQNAEGET. The segment covering 3342–3360 has biased composition (low complexity); it reads EQGAEEAGGNAAEPGAESG. N-linked (GlcNAc...) asparagine glycans are attached at residues asparagine 3546, asparagine 4367, asparagine 4823, asparagine 4901, asparagine 5186, asparagine 5546, and asparagine 5666. The segment at 5758 to 5799 is disordered; that stretch reads LAESRSDDGTVGDDVDLDDNALSGTTNSGWTTSSSNSERVRK. Residues 5767 to 5776 are compositionally biased toward acidic residues; sequence TVGDDVDLDD. Positions 5780–5794 are enriched in low complexity; that stretch reads SGTTNSGWTTSSSNS. N-linked (GlcNAc...) asparagine glycosylation is found at asparagine 5806, asparagine 5876, asparagine 5998, asparagine 6055, and asparagine 6369. Residues 6043–6115 form a disordered region; the sequence is GEADHTPADG…EASEAESVSA (73 aa). Polar residues predominate over residues 6051 to 6060; the sequence is DGSSNSSEDS. Over residues 6391–6405 the composition is skewed to basic and acidic residues; the sequence is EFTDTGPAPDDHTDE. The disordered stretch occupies residues 6391–6436; that stretch reads EFTDTGPAPDDHTDEGGANLDSTGGSGEPSSSAPVDPSGENEGQLL. Residues 6410–6423 show a composition bias toward polar residues; the sequence is LDSTGGSGEPSSSA. The N-linked (GlcNAc...) asparagine glycan is linked to asparagine 6453. 8 consecutive transmembrane segments (helical) span residues 6520–6540, 6552–6572, 6578–6598, 6627–6647, 6770–6790, 6831–6851, 6888–6908, and 6912–6932; these read IFIL…ALTI, VLIR…LMPA, LAGW…ALHP, IFVP…CVAT, LILG…GFVA, CVAL…QEIF, GLMV…FEVF, and GAIP…SLFV. N-linked (GlcNAc...) asparagine glycosylation is present at asparagine 7013. The chain crosses the membrane as a helical span at residues 7017–7037; the sequence is FVAALSDSLSQLVIAWCQFTI. Asparagine 7061 carries N-linked (GlcNAc...) asparagine glycosylation. Residues 7174–7242 adopt a coiled-coil conformation; it reads APQLRKENHA…RGLIESEIDD (69 aa). Residues 7379-7603 form a disordered region; the sequence is AAPAAGLRSH…LKKPGSPKQE (225 aa). Polar residues predominate over residues 7408–7417; the sequence is LGTNLSTPSA. The N-linked (GlcNAc...) asparagine glycan is linked to asparagine 7411. Composition is skewed to low complexity over residues 7474–7496, 7509–7541, and 7560–7582; these read PTPS…SVTP, SEAP…SSDL, and GEAA…AAQP.

As to quaternary structure, component of a complex, at least composed of cysteine repeat modular protein A (CRMPa), cysteine repeat modular protein B (CRMPb), micronemal protein 15 (MIC15) and thrombospondin type 1 domain-containing protein (TSP1).

It localises to the cell membrane. Its subcellular location is the endoplasmic reticulum. The protein resides in the golgi apparatus. Its function is as follows. Required for triggering rhoptry secretion. Plays a role in host cell invasion. The protein is Cysteine repeat modular protein B of Toxoplasma gondii.